The following is a 394-amino-acid chain: Chaperone protein DnaJ (394 aa).

The 66-residue stretch at 6–71 (DYYEVLEVTK…DKRARYDQFG (66 aa)) folds into the J domain. A CR-type zinc finger spans residues 152–234 (GVEKKFKLKK…CGGEGIEYGE (83 aa)). Zn(2+) contacts are provided by C165, C168, C182, C185, C208, C211, C222, and C225. CXXCXGXG motif repeat units lie at residues 165-172 (CSHCHGTG), 182-189 (CPTCKGSG), 208-215 (CPTCNGEG), and 222-229 (CKVCGGEG).

It belongs to the DnaJ family. As to quaternary structure, homodimer. The cofactor is Zn(2+).

Its subcellular location is the cytoplasm. Functionally, participates actively in the response to hyperosmotic and heat shock by preventing the aggregation of stress-denatured proteins and by disaggregating proteins, also in an autonomous, DnaK-independent fashion. Unfolded proteins bind initially to DnaJ; upon interaction with the DnaJ-bound protein, DnaK hydrolyzes its bound ATP, resulting in the formation of a stable complex. GrpE releases ADP from DnaK; ATP binding to DnaK triggers the release of the substrate protein, thus completing the reaction cycle. Several rounds of ATP-dependent interactions between DnaJ, DnaK and GrpE are required for fully efficient folding. Also involved, together with DnaK and GrpE, in the DNA replication of plasmids through activation of initiation proteins. The protein is Chaperone protein DnaJ of Bacteroides fragilis (strain YCH46).